The chain runs to 100 residues: Urease subunit gamma (100 aa).

The protein belongs to the urease gamma subunit family. In terms of assembly, heterotrimer of UreA (gamma), UreB (beta) and UreC (alpha) subunits. Three heterotrimers associate to form the active enzyme.

The protein localises to the cytoplasm. It catalyses the reaction urea + 2 H2O + H(+) = hydrogencarbonate + 2 NH4(+). Its pathway is nitrogen metabolism; urea degradation; CO(2) and NH(3) from urea (urease route): step 1/1. The protein is Urease subunit gamma of Marinobacter nauticus (strain ATCC 700491 / DSM 11845 / VT8) (Marinobacter aquaeolei).